The following is a 187-amino-acid chain: Preprocaerulein clone PXC202 (187 aa).

The propeptide occupies 1–9 (NDERRFADG). Residues 1 to 21 (NDERRFADGQQDYTGWMDFGR) form a disordered region. A Sulfotyrosine modification is found at Y13. F19 is modified (phenylalanine amide). Residues 23-73 (DDEDDVNERDVRGFGSFLGKALKAALKIGANALGGSPQQREANDERRFADG) constitute a propeptide that is removed on maturation. Y77 carries the post-translational modification Sulfotyrosine. F83 carries the post-translational modification Phenylalanine amide. The propeptide occupies 87–137 (DDEDDVNERDVRGFGSFLGKALKAALKIGANALGGSLQQREVNDERRFADG). Y141 bears the Sulfotyrosine mark. At F147 the chain carries Phenylalanine amide. The propeptide occupies 151 to 152 (DG). Y156 carries the post-translational modification Sulfotyrosine. Position 162 is a phenylalanine amide (F162). The propeptide occupies 166 to 187 (DDEDDVHERDVRGFGSFLGKAL).

The protein belongs to the gastrin/cholecystokinin family. As to expression, expressed by the skin glands.

The protein localises to the secreted. The pharmacological activities of caerulein are quite similar to the physiological activities of gastrin and related peptides. In Xenopus laevis (African clawed frog), this protein is Preprocaerulein clone PXC202.